Consider the following 503-residue polypeptide: uncharacterized protein (503 aa).

Residues 437–465 (LNKDLILENLIETENENDKQEFQKLLRTI) are a coiled coil.

It belongs to the IIV-6 467R family.

This is an uncharacterized protein from Invertebrate iridescent virus 6 (IIV-6).